The primary structure comprises 963 residues: Glycine dehydrogenase (decarboxylating) (963 aa).

At Lys-710 the chain carries N6-(pyridoxal phosphate)lysine.

Belongs to the GcvP family. In terms of assembly, the glycine cleavage system is composed of four proteins: P, T, L and H. Pyridoxal 5'-phosphate serves as cofactor.

It carries out the reaction N(6)-[(R)-lipoyl]-L-lysyl-[glycine-cleavage complex H protein] + glycine + H(+) = N(6)-[(R)-S(8)-aminomethyldihydrolipoyl]-L-lysyl-[glycine-cleavage complex H protein] + CO2. Functionally, the glycine cleavage system catalyzes the degradation of glycine. The P protein binds the alpha-amino group of glycine through its pyridoxal phosphate cofactor; CO(2) is released and the remaining methylamine moiety is then transferred to the lipoamide cofactor of the H protein. The chain is Glycine dehydrogenase (decarboxylating) from Pseudoalteromonas translucida (strain TAC 125).